Reading from the N-terminus, the 574-residue chain is Proline--tRNA ligase (574 aa).

The protein belongs to the class-II aminoacyl-tRNA synthetase family. ProS type 1 subfamily. Homodimer.

It localises to the cytoplasm. It catalyses the reaction tRNA(Pro) + L-proline + ATP = L-prolyl-tRNA(Pro) + AMP + diphosphate. Catalyzes the attachment of proline to tRNA(Pro) in a two-step reaction: proline is first activated by ATP to form Pro-AMP and then transferred to the acceptor end of tRNA(Pro). As ProRS can inadvertently accommodate and process non-cognate amino acids such as alanine and cysteine, to avoid such errors it has two additional distinct editing activities against alanine. One activity is designated as 'pretransfer' editing and involves the tRNA(Pro)-independent hydrolysis of activated Ala-AMP. The other activity is designated 'posttransfer' editing and involves deacylation of mischarged Ala-tRNA(Pro). The misacylated Cys-tRNA(Pro) is not edited by ProRS. This chain is Proline--tRNA ligase, found in Marinomonas sp. (strain MWYL1).